Consider the following 577-residue polypeptide: Aspartate--tRNA ligase (577 aa).

Glu-171 contacts L-aspartate. Residues 195–198 are aspartate; the sequence is QLFK. Arg-217 provides a ligand contact to L-aspartate. ATP is bound by residues 217-219 and Gln-226; that span reads RDE. His-437 serves as a coordination point for L-aspartate. An ATP-binding site is contributed by Glu-472. Position 479 (Arg-479) interacts with L-aspartate. 524–527 lines the ATP pocket; that stretch reads GFDR.

It belongs to the class-II aminoacyl-tRNA synthetase family. Type 1 subfamily. In terms of assembly, homodimer.

It is found in the cytoplasm. It catalyses the reaction tRNA(Asp) + L-aspartate + ATP = L-aspartyl-tRNA(Asp) + AMP + diphosphate. Functionally, catalyzes the attachment of L-aspartate to tRNA(Asp) in a two-step reaction: L-aspartate is first activated by ATP to form Asp-AMP and then transferred to the acceptor end of tRNA(Asp). This chain is Aspartate--tRNA ligase, found in Deinococcus deserti (strain DSM 17065 / CIP 109153 / LMG 22923 / VCD115).